The primary structure comprises 493 residues: Transcript termination protein A18 (493 aa).

One can recognise a Helicase ATP-binding domain in the interval 100–256 (MIELKRPLYI…NSIINIAKLS (157 aa)). An ATP-binding site is contributed by 113–120 (LACGFGKT). The DESH box signature appears at 206 to 209 (DESH).

The protein belongs to the helicase family. Poxviruses subfamily. As to quaternary structure, interacts with G2. Might be part of a transcription complex composed at least of G2, A18, and H5.

The protein localises to the virion. Functionally, DNA helicase which seems to act as a postreplicative transcription termination factor. Involved in ATP-dependent release of nascent RNA. Forms a stable complex with single-stranded DNA, and to a lesser extent RNA. This is Transcript termination protein A18 from Cowpox virus (strain GRI-90 / Grishak) (CPV).